The chain runs to 598 residues: MTLPVSDPAAWATAMNNLGMAPLGIAGQPILPDFDPALGMMTGIPPITPMMPGLGIVPPPIPPDMPVAKEIIHCKSCTLFPPNPNLPPPATRERPPGCKTVFVGGLPENGTEQIIVEVFEQCGEIIAIRKSKKNFCHIRFAEEYMVDKALYLSGYRIRLGSSTDKKDTGRLHVDFAQARDDLYEWECKQRMLAREERHRRRMEEERMRPPSPPPVVHYSDHECSIVAEKLKDDSKFSEAVQTLLTWIERGEVNRRSANHFYSMIQSANSHVRRLVNEKATHEKEMEEAKEKFKQALSGILIQFEQIVAVYHSASKQKAWDHFTKAQRKNISVWCKQAEEIRNIHNDELMGIRREEEMEMSDDEIEETTETKETEESALVSQAEALKEENDSLRWQLDAYRNEVELLKQEQGKAHREDDPNKEQQLKLLQQALQGMQQHLLKVQEEYKKKEAELDRIKDDNLQVEQLLENFHEKQENCGSRLCASSQEGEQPLEKTAVSNPVKSEREALLVGIISTFLHVHPFGASIEYICSYLNRLDNKASYQIPSKLTTSPLLPISTSDVESLMSRLQHTFRQEMTGVGASLEKRWKFCGFEGLKLT.

An RRM domain is found at 99–178 (KTVFVGGLPE…GRLHVDFAQA (80 aa)). Coiled coils occupy residues 264–299 (IQSA…LSGI) and 352–476 (RREE…KQEN).

It belongs to the ENOX family. Requires Cu cation as cofactor. Post-translationally, glycosylated.

Its subcellular location is the cell membrane. The protein localises to the secreted. It is found in the extracellular space. Inhibited by the antitumor sulfonylurea LY181984, the vabilloid capsaicin, and retinoids. Functionally, may be involved in cell growth. Probably acts as a terminal oxidase of plasma electron transport from cytosolic NAD(P)H via hydroquinones to acceptors at the cell surface. Hydroquinone oxidase activity alternates with a protein disulfide-thiol interchange/oxidoreductase activity which may control physical membrane displacements associated with vesicle budding or cell enlargement. The activities oscillate with a period length of 22 minutes and play a role in control of the ultradian cellular biological clock. This is Ecto-NOX disulfide-thiol exchanger 2 (Enox2) from Mus musculus (Mouse).